The following is a 537-amino-acid chain: Probable alpha-galactosidase A (537 aa).

The signal sequence occupies residues 1–23; it reads MNQGTKSILLAATLAAIPWQVYG. Cys-46 and Cys-78 form a disulfide bridge. Asn-49, Asn-87, Asn-93, and Asn-123 each carry an N-linked (GlcNAc...) asparagine glycan. Cys-126 and Cys-156 are joined by a disulfide. Residue Asp-154 is the Nucleophile of the active site. A glycan (N-linked (GlcNAc...) asparagine) is linked at Asn-203. Residue Asp-212 is the Proton donor of the active site. 2 N-linked (GlcNAc...) asparagine glycosylation sites follow: Asn-355 and Asn-436. Residues 413-537 form the Ricin B-type lectin domain; sequence CSSVVPTGLV…FGLPSGVQLS (125 aa). 2 disulfides stabilise this stretch: Cys-430/Cys-444 and Cys-469/Cys-482. A glycan (N-linked (GlcNAc...) asparagine) is linked at Asn-491.

It belongs to the glycosyl hydrolase 27 family.

It is found in the secreted. The enzyme catalyses Hydrolysis of terminal, non-reducing alpha-D-galactose residues in alpha-D-galactosides, including galactose oligosaccharides, galactomannans and galactolipids.. Functionally, hydrolyzes a variety of simple alpha-D-galactoside as well as more complex molecules such as oligosaccharides and polysaccharides. The protein is Probable alpha-galactosidase A (aglA) of Aspergillus niger (strain ATCC MYA-4892 / CBS 513.88 / FGSC A1513).